A 168-amino-acid polypeptide reads, in one-letter code: Phosphopantetheine adenylyltransferase (168 aa).

A substrate-binding site is contributed by Thr-14. Residues Thr-14–Phe-15 and His-22 each bind ATP. Substrate contacts are provided by Lys-46, Leu-78, and Arg-92. Residues Gly-93–Arg-95, Glu-103, and Tyr-128–Ser-134 each bind ATP.

This sequence belongs to the bacterial CoaD family. In terms of assembly, homohexamer. It depends on Mg(2+) as a cofactor.

It is found in the cytoplasm. The catalysed reaction is (R)-4'-phosphopantetheine + ATP + H(+) = 3'-dephospho-CoA + diphosphate. It functions in the pathway cofactor biosynthesis; coenzyme A biosynthesis; CoA from (R)-pantothenate: step 4/5. Reversibly transfers an adenylyl group from ATP to 4'-phosphopantetheine, yielding dephospho-CoA (dPCoA) and pyrophosphate. The protein is Phosphopantetheine adenylyltransferase of Xanthomonas euvesicatoria pv. vesicatoria (strain 85-10) (Xanthomonas campestris pv. vesicatoria).